A 205-amino-acid chain; its full sequence is SCO2-like protein RF_0960 (205 aa).

Cu cation-binding residues include Cys-82, Cys-86, and His-172.

The protein belongs to the SCO1/2 family.

The sequence is that of SCO2-like protein RF_0960 from Rickettsia felis (strain ATCC VR-1525 / URRWXCal2) (Rickettsia azadi).